The primary structure comprises 268 residues: Protein CONTINUOUS VASCULAR RING 1 (268 aa).

Over 1–70 (MGDEKPVIVM…GWASKKFMTG (70 aa)) the chain is Cytoplasmic. The disordered stretch occupies residues 21 to 48 (IPVADSGDKDDGSSSKPSSSSSASSSSH). Positions 34 to 48 (SSKPSSSSSASSSSH) are enriched in low complexity. Residues 71–91 (CVILLPIAITFYITWWFIHFV) traverse the membrane as a helical segment. Topologically, residues 92-103 (DGFFSPIYAQLG) are extracellular. The chain crosses the membrane as a helical span at residues 104 to 124 (INVFGFGFLTSIAFIFLVGVF). Topologically, residues 125–268 (MSSWLGASVL…LASIDRATSL (144 aa)) are cytoplasmic.

This sequence belongs to the plant COV1 protein family. In terms of tissue distribution, mostly expressed in flowers and stems, and, to a lower extent, in roots and leaves.

It localises to the membrane. Its function is as follows. Involved in the regulation of vascular patterning in the stem, probably by negatively regulating the differentiation of vascular tissue. The polypeptide is Protein CONTINUOUS VASCULAR RING 1 (Arabidopsis thaliana (Mouse-ear cress)).